A 137-amino-acid chain; its full sequence is Large ribosomal subunit protein uL22 (137 aa).

The protein belongs to the universal ribosomal protein uL22 family. As to quaternary structure, part of the 50S ribosomal subunit.

Its function is as follows. This protein binds specifically to 23S rRNA; its binding is stimulated by other ribosomal proteins, e.g. L4, L17, and L20. It is important during the early stages of 50S assembly. It makes multiple contacts with different domains of the 23S rRNA in the assembled 50S subunit and ribosome. Functionally, the globular domain of the protein is located near the polypeptide exit tunnel on the outside of the subunit, while an extended beta-hairpin is found that lines the wall of the exit tunnel in the center of the 70S ribosome. The sequence is that of Large ribosomal subunit protein uL22 from Flavobacterium johnsoniae (strain ATCC 17061 / DSM 2064 / JCM 8514 / BCRC 14874 / CCUG 350202 / NBRC 14942 / NCIMB 11054 / UW101) (Cytophaga johnsonae).